A 323-amino-acid chain; its full sequence is Apolipoprotein E (323 aa).

The N-terminal stretch at 1 to 18 (MKVLWAALVVTLLAGCWA) is a signal peptide. 8 consecutive repeat copies span residues 86–107 (ALMDETMKEVKAYKAELDEQLG), 108–129 (PMTSETQARVAKELQAAQARLR), 130–151 (SDMEDVRNRLTQYRGELQAMLG), 152–173 (QSSEELRARFASHMRKLRKRVL), 174–195 (RDAEDLQRRLAVYKAGVREGAE), 196–217 (RSVSSIRERLWPLLEQARERNA), 218–239 (KVGALATQPLLERADALGQQLR), and 240–261 (GQLEEMSSRARGHLEEMREQIQ). The interval 86–261 (ALMDETMKEV…HLEEMREQIQ (176 aa)) is 8 X 22 AA approximate tandem repeats. Methionine 149 bears the Methionine sulfoxide mark. At serine 153 the chain carries Phosphoserine. Positions 164–174 (HMRKLRKRVLR) are LDL and other lipoprotein receptors binding. 168 to 171 (LRKR) lines the heparin pocket. The tract at residues 216–296 (NAKVGALATQ…SWFEPLLEDM (81 aa)) is lipid-binding and lipoprotein association. Residue 235–242 (GQQLRGQL) participates in heparin binding. Residues 272–323 (DQIRQKAEAFQARLKSWFEPLLEDMQRQWDGLVEKVQAAVATIPTSKPVEEP) form a homooligomerization region. Residues 284-296 (RLKSWFEPLLEDM) are specificity for association with VLDL.

This sequence belongs to the apolipoprotein A1/A4/E family. Homotetramer. May interact with ABCA1; functionally associated with ABCA1 in the biogenesis of HDLs. May interact with APP/A4 amyloid-beta peptide; the interaction is extremely stable in vitro but its physiological significance is unclear. May interact with MAPT. May interact with MAP2. In the cerebrospinal fluid, interacts with secreted SORL1. Interacts with PMEL; this allows the loading of PMEL luminal fragment on ILVs to induce fibril nucleation. In terms of processing, APOE exists as multiple glycosylated and sialylated glycoforms within cells and in plasma. The extent of glycosylation and sialylation are tissue and context specific. Glycated in plasma VLDL. Post-translationally, phosphorylated by FAM20C in the extracellular medium.

The protein resides in the secreted. It localises to the extracellular space. Its subcellular location is the extracellular matrix. It is found in the extracellular vesicle. The protein localises to the endosome. The protein resides in the multivesicular body. In terms of biological role, APOE is an apolipoprotein, a protein associating with lipid particles, that mainly functions in lipoprotein-mediated lipid transport between organs via the plasma and interstitial fluids. APOE is a core component of plasma lipoproteins and is involved in their production, conversion and clearance. Apolipoproteins are amphipathic molecules that interact both with lipids of the lipoprotein particle core and the aqueous environment of the plasma. As such, APOE associates with chylomicrons, chylomicron remnants, very low density lipoproteins (VLDL) and intermediate density lipoproteins (IDL) but shows a preferential binding to high-density lipoproteins (HDL). It also binds a wide range of cellular receptors including the LDL receptor/LDLR and the very low-density lipoprotein receptor/VLDLR that mediate the cellular uptake of the APOE-containing lipoprotein particles. Finally, APOE also has a heparin-binding activity and binds heparan-sulfate proteoglycans on the surface of cells, a property that supports the capture and the receptor-mediated uptake of APOE-containing lipoproteins by cells. The protein is Apolipoprotein E (APOE) of Canis lupus familiaris (Dog).